The following is a 598-amino-acid chain: MTALANIRNFSIIAHIDHGKSTLADRFIQMCGALQDREMQAQVLDSMDIERERGITIKAQSVTLYYDHPNGERYQLNFIDTPGHVDFSYEVSRSLAACEGALLVVDAAQGVEAQSVANCYTAVDQGLEVMAVLNKIDLPQVEPERVIQEIEDIIGIDAVDAPRVSAKSGLGVDKLLEALVEFIPAPTGDRDAPLQALIIDSWFDNYLGVVSLVRVRQGTIKKGDKLYIKSTKDAHLVGSIGVFTPKPLDTGILEAGEVGFIIAGIKDIAGAPVGDTITHASTPDVDRIPGFKQITPQVYAGMFPVESTDFEKFREALQKLQINDASLFFEPDTSDALGFGFRCGFLGMLHMEIIQERLEREYDLDLITTAPSVIYEIVKKDGSIIYVDNPSRLPEPNNIEEFREPIARCQILVPQDYLGNVMTLCIERRGVQVDMRFMGRQVQLIFDIPMGEVVMDFFDRLKSVSRGFASLDYNFERYQVDKLVKVDVLINGDKVDALAMIVHETQSRYRGNALVTKMKELIPRQMFDVAIQAAIGSQIIGRSTVKAMRKDVLAKCYGGDVSRKKKLLSKQKAGKKRMKQVGNVEIPQEAFLAVLQVD.

The tr-type G domain occupies 5-187 (ANIRNFSIIA…ALVEFIPAPT (183 aa)). Residues 17–22 (DHGKST) and 134–137 (NKID) each bind GTP.

The protein belongs to the TRAFAC class translation factor GTPase superfamily. Classic translation factor GTPase family. LepA subfamily.

It is found in the cell inner membrane. It carries out the reaction GTP + H2O = GDP + phosphate + H(+). Its function is as follows. Required for accurate and efficient protein synthesis under certain stress conditions. May act as a fidelity factor of the translation reaction, by catalyzing a one-codon backward translocation of tRNAs on improperly translocated ribosomes. Back-translocation proceeds from a post-translocation (POST) complex to a pre-translocation (PRE) complex, thus giving elongation factor G a second chance to translocate the tRNAs correctly. Binds to ribosomes in a GTP-dependent manner. In Psychrobacter cryohalolentis (strain ATCC BAA-1226 / DSM 17306 / VKM B-2378 / K5), this protein is Elongation factor 4.